The following is a 110-amino-acid chain: Progonadoliberin-2 (110 aa).

The N-terminal stretch at 1–26 (MASIGQGLVLLLLLLLLTAQPGPLKA) is a signal peptide. Residues 25 to 85 (KAQHWSHGWY…KALAPPEDTV (61 aa)) form a disordered region. Gly36 carries the glycine amide modification.

The protein belongs to the GnRH family. Midbrain.

Its subcellular location is the secreted. Functionally, stimulates the secretion of gonadotropins; it stimulates the secretion of both luteinizing and follicle-stimulating hormones. The sequence is that of Progonadoliberin-2 (GNRH2) from Suncus murinus (Asian house shrew).